The chain runs to 601 residues: Ubiquilin-4 (601 aa).

Positions 13 to 87 (IRVTVKTPKD…VHLVIKTPQK (75 aa)) constitute a Ubiquitin-like domain. Glycyl lysine isopeptide (Lys-Gly) (interchain with G-Cter in SUMO2) cross-links involve residues K23 and K62. The segment at 87-155 (KAQDPAAATA…GAGEGSPSAT (69 aa)) is disordered. Positions 88 to 138 (AQDPAAATASSPSTPDPASAPSTTPASPATPAQPSTSGSASSDAGSGSRRS) are enriched in low complexity. Residues S98 and S144 each carry the phosphoserine modification. A compositionally biased stretch (gly residues) spans 139–149 (SGGGPSPGAGE). 2 consecutive STI1 domains span residues 192 to 229 (NPEMLSQIMENPLVQDMMSNPDLMRHMIMANPQMQQLM) and 230 to 261 (ERNPEISHMLNNPELMRQTMELARNPAMMQEM). Phosphothreonine is present on T287. A disordered region spans residues 301–366 (FGNNPFSSLA…QVHPTVSNPF (66 aa)). A compositionally biased stretch (low complexity) spans 307-318 (SSLAGNSDSSSS). At S318 the chain carries Phosphoserine; by ATM. Residues 329–340 (LPNPWSPSPPTS) are compositionally biased toward pro residues. Gly residues predominate over residues 344–354 (GSGGEGTGGSG). Over residues 357 to 366 (QVHPTVSNPF) the composition is skewed to polar residues. 2 consecutive STI1 domains span residues 393-440 (NPQL…QEQL) and 444-476 (LPVFLQQMQNPESLSILTNPRAMQALLQIQQGL). Residues 490 to 533 (LGSFGISRTPAPSAGSNAGSTPEAPTSSPATPATSSPTGASSAQ) form a disordered region. A compositionally biased stretch (low complexity) spans 507–533 (AGSTPEAPTSSPATPATSSPTGASSAQ). Positions 553–598 (QTPEVRFQQQLEQLNSMGFINREANLQALIATGGDINAAIERLLGS) constitute a UBA domain.

Homooligomer. Binds signal sequences of proteins that are targeted to the endoplasmic reticulum. Interacts (via UBA domain) with GJA1 (not ubiquitinated) and with ubiquitin; both compete for the same binding site. Interacts (via UBA domain) with ubiquitin and with polyubiquitin chains. Interacts (via ubiquitin-like domain) with PSMD2 and PSMD4, regulatory subunits of the 26S proteasome. Interacts with ATXN1/SCA1; interaction with ATXN1 inhibits polyubiquitination of UBQLN4 and interferes with PSMD4 binding. Interacts with HERPUD1. Interacts (via ubiquitin-like domain) with UBQLN1 (via UBA domain). Interacts with UBQLN2. Interacts (via STI1 1 and 2 domains) with MAP1LC3A/B/C. Interacts with BAG6. Interacts with MRE11 (when ubiquitinated); interaction with ubiquitinated MRE11 leads to MRE11 removal from chromatin. Interacts with DESI1/POST; leading to nuclear export. Interacts with BCL2A1 and BCL2L10. As to quaternary structure, (Microbial infection) Interacts with Mumps virus protein SH. In terms of processing, phosphorylated by ATM at Ser-318 in response to DNA damage, leading to localization in the nucleus and recruitment to sites of DNA damage. Ubiquitinated; this does not lead to proteasomal degradation. May undergo both 'Lys-48'- and 'Lys-63'-linked polyubiquitination. Highly expressed in pancreas, kidney, skeletal muscle, heart and throughout the brain, and at lower levels in placenta, lung and liver.

The protein resides in the nucleus. Its subcellular location is the cytoplasm. It is found in the chromosome. The protein localises to the endoplasmic reticulum. It localises to the perinuclear region. The protein resides in the cytoplasmic vesicle. Its subcellular location is the autophagosome. In terms of biological role, regulator of protein degradation that mediates the proteasomal targeting of misfolded, mislocalized or accumulated proteins. Acts by binding polyubiquitin chains of target proteins via its UBA domain and by interacting with subunits of the proteasome via its ubiquitin-like domain. Key regulator of DNA repair that represses homologous recombination repair: in response to DNA damage, recruited to sites of DNA damage following phosphorylation by ATM and acts by binding and removing ubiquitinated MRE11 from damaged chromatin, leading to MRE11 degradation by the proteasome. MRE11 degradation prevents homologous recombination repair, redirecting double-strand break repair toward non-homologous end joining (NHEJ). Specifically recognizes and binds mislocalized transmembrane-containing proteins and targets them to proteasomal degradation. Collaborates with DESI1/POST in the export of ubiquitinated proteins from the nucleus to the cytoplasm. Also plays a role in the regulation of the proteasomal degradation of non-ubiquitinated GJA1. Acts as an adapter protein that recruits UBQLN1 to the autophagy machinery. Mediates the association of UBQLN1 with autophagosomes and the autophagy-related protein LC3 (MAP1LC3A/B/C) and may assist in the maturation of autophagosomes to autolysosomes by mediating autophagosome-lysosome fusion. The protein is Ubiquilin-4 of Homo sapiens (Human).